The sequence spans 164 residues: 17.8 kDa class II heat shock protein (164 aa).

A sHSP domain is found at 48-164; that stretch reads DARAMAATPA…KPKTIEVKVA (117 aa).

This sequence belongs to the small heat shock protein (HSP20) family.

It localises to the cytoplasm. This Zea mays (Maize) protein is 17.8 kDa class II heat shock protein.